Here is a 174-residue protein sequence, read N- to C-terminus: UPF0113 protein APE_0516.1 (174 aa).

This sequence belongs to the UPF0113 family.

This Aeropyrum pernix (strain ATCC 700893 / DSM 11879 / JCM 9820 / NBRC 100138 / K1) protein is UPF0113 protein APE_0516.1.